A 293-amino-acid polypeptide reads, in one-letter code: Elongation factor Ts (293 aa).

The interval 80-83 is involved in Mg(2+) ion dislocation from EF-Tu; sequence TDFV.

It belongs to the EF-Ts family.

It is found in the cytoplasm. Associates with the EF-Tu.GDP complex and induces the exchange of GDP to GTP. It remains bound to the aminoacyl-tRNA.EF-Tu.GTP complex up to the GTP hydrolysis stage on the ribosome. This Staphylococcus aureus (strain USA300) protein is Elongation factor Ts.